Here is a 356-residue protein sequence, read N- to C-terminus: Phenylalanine--tRNA ligase alpha subunit (356 aa).

Glu-260 provides a ligand contact to Mg(2+).

Belongs to the class-II aminoacyl-tRNA synthetase family. Phe-tRNA synthetase alpha subunit type 1 subfamily. In terms of assembly, tetramer of two alpha and two beta subunits. The cofactor is Mg(2+).

Its subcellular location is the cytoplasm. The enzyme catalyses tRNA(Phe) + L-phenylalanine + ATP = L-phenylalanyl-tRNA(Phe) + AMP + diphosphate + H(+). The sequence is that of Phenylalanine--tRNA ligase alpha subunit from Gluconacetobacter diazotrophicus (strain ATCC 49037 / DSM 5601 / CCUG 37298 / CIP 103539 / LMG 7603 / PAl5).